The chain runs to 137 residues: Ribosomal RNA large subunit methyltransferase H (137 aa).

Residues L56, G85, and 104 to 109 (LSPLTL) contribute to the S-adenosyl-L-methionine site.

It belongs to the RNA methyltransferase RlmH family. As to quaternary structure, homodimer.

The protein resides in the cytoplasm. The catalysed reaction is pseudouridine(1915) in 23S rRNA + S-adenosyl-L-methionine = N(3)-methylpseudouridine(1915) in 23S rRNA + S-adenosyl-L-homocysteine + H(+). In terms of biological role, specifically methylates the pseudouridine at position 1915 (m3Psi1915) in 23S rRNA. This is Ribosomal RNA large subunit methyltransferase H from Thermus thermophilus (strain ATCC BAA-163 / DSM 7039 / HB27).